A 325-amino-acid chain; its full sequence is NADH-quinone oxidoreductase subunit H (325 aa).

8 helical membrane passes run 11–31, 81–101, 114–134, 154–174, 186–206, 237–257, 265–285, and 304–324; these read ILLT…CGAF, VIFT…FAIV, IGIL…LFAG, LSYE…AGSF, VWNV…GVAV, FFVG…TLFF, LPPF…FILI, and ICLP…LWQA.

This sequence belongs to the complex I subunit 1 family. NDH-1 is composed of 13 different subunits. Subunits NuoA, H, J, K, L, M, N constitute the membrane sector of the complex.

It localises to the cell inner membrane. It catalyses the reaction a quinone + NADH + 5 H(+)(in) = a quinol + NAD(+) + 4 H(+)(out). Its function is as follows. NDH-1 shuttles electrons from NADH, via FMN and iron-sulfur (Fe-S) centers, to quinones in the respiratory chain. The immediate electron acceptor for the enzyme in this species is believed to be ubiquinone. Couples the redox reaction to proton translocation (for every two electrons transferred, four hydrogen ions are translocated across the cytoplasmic membrane), and thus conserves the redox energy in a proton gradient. This subunit may bind ubiquinone. The polypeptide is NADH-quinone oxidoreductase subunit H (Escherichia coli O139:H28 (strain E24377A / ETEC)).